The sequence spans 80 residues: Protein pegasus (80 aa).

An N-terminal signal peptide occupies residues methionine 1–glycine 22. The Kazal-like domain occupies proline 24–proline 80. 3 cysteine pairs are disulfide-bonded: cysteine 30/cysteine 65, cysteine 34/cysteine 58, and cysteine 43/cysteine 79.

In terms of assembly, interacts with wg; the interaction facilitates short-range diffusion of wg. In terms of tissue distribution, strongly expressed in the developing fly wing but is excluded from the presumptive wing margin.

It localises to the secreted. Increases short-range diffusion of the wingless/wg protein, enhancing its signaling and expression of target genes required for wing margin morphogenesis. May act as a serine protease inhibitor since it possess the Kazal serine protease inhibitor signature. The sequence is that of Protein pegasus from Drosophila melanogaster (Fruit fly).